The chain runs to 880 residues: DNA-directed RNA polymerase subunit Rpo1N (880 aa).

The Zn(2+) site is built by Cys58, Cys61, Cys68, His71, Cys98, Cys101, Cys146, and Cys149. Mg(2+) contacts are provided by Asp456, Asp458, and Asp460. Zn(2+)-binding residues include Arg573, Cys575, Cys580, His582, and Ser584.

The protein belongs to the RNA polymerase beta' chain family. As to quaternary structure, part of the 13-subunit RNA polymerase complex. Interacts with TFS4. (Microbial infection) Binds viral protein RIP, which blocks global transcription. Mg(2+) is required as a cofactor. Zn(2+) serves as cofactor.

It localises to the cytoplasm. The enzyme catalyses RNA(n) + a ribonucleoside 5'-triphosphate = RNA(n+1) + diphosphate. Its activity is regulated as follows. (Microbial infection) Binds to viral protein RIP (AC Q3V4R7), which inhibits global transcription. Its function is as follows. DNA-dependent RNA polymerase (RNAP) catalyzes the transcription of DNA into RNA using the four ribonucleoside triphosphates as substrates. Forms the clamp head domain. This chain is DNA-directed RNA polymerase subunit Rpo1N, found in Sulfolobus acidocaldarius (strain ATCC 33909 / DSM 639 / JCM 8929 / NBRC 15157 / NCIMB 11770).